Here is a 440-residue protein sequence, read N- to C-terminus: F-box protein pof12 (440 aa).

One can recognise an F-box domain in the interval 8–54 (KNPASIFSHETLLHVLNDLSAHDLAALERVSRSWNSIVRRSSVWHNL).

As to quaternary structure, interacts with skp1.

It localises to the nucleus. In Schizosaccharomyces pombe (strain 972 / ATCC 24843) (Fission yeast), this protein is F-box protein pof12 (pof12).